Consider the following 383-residue polypeptide: L-aspartate/L-glutamate decarboxylase (383 aa).

Position 232 is an N6-(pyridoxal phosphate)lysine (lysine 232).

Belongs to the group II decarboxylase family. MfnA subfamily. In terms of assembly, monomer. It depends on pyridoxal 5'-phosphate as a cofactor.

It catalyses the reaction L-aspartate + H(+) = beta-alanine + CO2. The catalysed reaction is L-glutamate + H(+) = 4-aminobutanoate + CO2. The enzyme catalyses L-cysteate + H(+) = taurine + CO2. It carries out the reaction 3-sulfino-L-alanine + H(+) = hypotaurine + CO2. It participates in cofactor biosynthesis; coenzyme A biosynthesis. Catalyzes the decarboxylation of L-aspartate to produce beta-alanine, and the decarboxylation of L-glutamate to produce 4-aminobutanoate. Can also use cysteate and, to a lesser extent, cysteine sulfite (3-sulfino-L-alanine), but not L-tyrosine. Specific activities toward L-aspartate and cysteate are higher than toward L-glutamate. This Pyrococcus horikoshii (strain ATCC 700860 / DSM 12428 / JCM 9974 / NBRC 100139 / OT-3) protein is L-aspartate/L-glutamate decarboxylase.